We begin with the raw amino-acid sequence, 328 residues long: UPF0421 protein SAUSA300_1870 (328 aa).

Helical transmembrane passes span 19 to 39, 61 to 81, 108 to 128, and 132 to 152; these read IAIF…IYAI, LPAT…FGDQ, VAVL…IFNF, and TLTA…VFPP.

This sequence belongs to the UPF0421 family.

It localises to the cell membrane. This is UPF0421 protein SAUSA300_1870 from Staphylococcus aureus (strain USA300).